The primary structure comprises 106 residues: Nucleoid-associated protein RPD_0086 (106 aa).

This sequence belongs to the YbaB/EbfC family. Homodimer.

It localises to the cytoplasm. The protein resides in the nucleoid. In terms of biological role, binds to DNA and alters its conformation. May be involved in regulation of gene expression, nucleoid organization and DNA protection. The polypeptide is Nucleoid-associated protein RPD_0086 (Rhodopseudomonas palustris (strain BisB5)).